Consider the following 306-residue polypeptide: Glutaminase (306 aa).

Residues serine 64, asparagine 115, glutamate 159, asparagine 166, tyrosine 190, tyrosine 242, and valine 260 each contribute to the substrate site.

It belongs to the glutaminase family. In terms of assembly, homotetramer.

The catalysed reaction is L-glutamine + H2O = L-glutamate + NH4(+). The chain is Glutaminase from Aeromonas hydrophila subsp. hydrophila (strain ATCC 7966 / DSM 30187 / BCRC 13018 / CCUG 14551 / JCM 1027 / KCTC 2358 / NCIMB 9240 / NCTC 8049).